The chain runs to 776 residues: MRQNYDDRKIVKQYREIARQIVKKEGLYKNMEQAELCEQTNFWREKFKTKPMTDRDKINIFALAREAASRIIGLDAVVVQLIGALVLGDGKVAEMKTGEGKTLMSLFVMFIEVMRGNRVHLVTANEYLARRDREEIGQVLEYLGVSVALNESGLDIAQKKAIYTADVIYGTASEFGFDYLRDNMVRQKEDKVQSGLDFVLIDEADSILIDEARTPLLISDRKEEDLSLYHTANKLVKKMMKDDYEMEEHKRFVWLNDAGIEKAQKFWGVESLYSAEAQSELRITMLLMRAHFLMHKDKDYVVLDDEVLIIDPHTGRALPGRRFNDGLHQAIEAKEGVEVKEESRTLATITIQNYFRMYKKISGMTGTAKTEEEEFRQIYNMDVVVIPTNLRVNREDMQDDIFYTKKEKGRAIVYEVSWRYEKGQPTLIGTSSIKSNEWISGLLDAAGIPHQVLNAKNHAQEAEIIAKAGKRGMVTLATNMAGRGTDIKLDPDVHKLGGLAVIGTERHESRRIDLQLMGRSGRRGDPGFSKFMISLEDDLLEQFESKSWEKLSAKLKRKAPRDGKPVNSRKIHAVVVDAQKRLEGANYDIRKDLLSYDEVIDLQRKMVYKERDLLLERNKLGVSSEKILREVAEYSFIHPSDIPEEELEIYYSRQKELLGGTKFPISFDQVTLMEPREVVEEIVSWHKKERNKFPAETIAAIEREVYLNLMDQMWVMHLDAMVQLREGIHLRAYGQQDPLVMYQKEGAQLFEKFQADYHFYFAHALLELDPDGLIQG.

ATP-binding positions include Q80, 98–102 (GEGKT), and D486.

Belongs to the SecA family. In terms of assembly, monomer and homodimer. Part of the essential Sec protein translocation apparatus which comprises SecA, SecYEG and auxiliary proteins SecDF. Other proteins may also be involved.

Its subcellular location is the cell membrane. The protein resides in the cytoplasm. The catalysed reaction is ATP + H2O + cellular proteinSide 1 = ADP + phosphate + cellular proteinSide 2.. In terms of biological role, part of the Sec protein translocase complex. Interacts with the SecYEG preprotein conducting channel. Has a central role in coupling the hydrolysis of ATP to the transfer of proteins into and across the cell membrane, serving as an ATP-driven molecular motor driving the stepwise translocation of polypeptide chains across the membrane. This is Protein translocase subunit SecA 2 from Listeria monocytogenes serovar 1/2a (strain ATCC BAA-679 / EGD-e).